A 209-amino-acid polypeptide reads, in one-letter code: A-type ATP synthase subunit D (209 aa).

This sequence belongs to the V-ATPase D subunit family. In terms of assembly, has multiple subunits with at least A(3), B(3), C, D, E, F, H, I and proteolipid K(x).

The protein resides in the cell membrane. Component of the A-type ATP synthase that produces ATP from ADP in the presence of a proton gradient across the membrane. In Sulfolobus acidocaldarius (strain ATCC 33909 / DSM 639 / JCM 8929 / NBRC 15157 / NCIMB 11770), this protein is A-type ATP synthase subunit D.